The following is a 329-amino-acid chain: DNA-directed RNA polymerase subunit alpha (329 aa).

Positions 1–234 (MSGSVTEFLK…EQLDAFVELR (234 aa)) are alpha N-terminal domain (alpha-NTD). Positions 248 to 329 (FDPILLRPVD…WPPESIAEKD (82 aa)) are alpha C-terminal domain (alpha-CTD).

Belongs to the RNA polymerase alpha chain family. In terms of assembly, homodimer. The RNAP catalytic core consists of 2 alpha, 1 beta, 1 beta' and 1 omega subunit. When a sigma factor is associated with the core the holoenzyme is formed, which can initiate transcription.

The enzyme catalyses RNA(n) + a ribonucleoside 5'-triphosphate = RNA(n+1) + diphosphate. Functionally, DNA-dependent RNA polymerase catalyzes the transcription of DNA into RNA using the four ribonucleoside triphosphates as substrates. In Pseudoalteromonas atlantica (strain T6c / ATCC BAA-1087), this protein is DNA-directed RNA polymerase subunit alpha.